The sequence spans 419 residues: Lipid II:glycine glycyltransferase (419 aa).

It belongs to the FemABX family.

Its subcellular location is the cytoplasm. It carries out the reaction beta-D-GlcNAc-(1-&gt;4)-Mur2Ac(oyl-L-Ala-D-isoglutaminyl-L-Lys-D-Ala-D-Ala)-di-trans,octa-cis-undecaprenyl diphosphate + glycyl-tRNA(Gly) = beta-D-GlcNAc-(1-&gt;4)-Mur2Ac(oyl-L-Ala-D-isoglutaminyl-L-Lys-(N(6)-Gly)-D-Ala-D-Ala)-di-trans,octa-cis-undecaprenyl diphosphate + tRNA(Gly) + H(+). In terms of biological role, catalyzes the incorporation of amino acid(s) into the interchain peptide bridge of peptidoglycan, using aminoacyl-tRNA as amino acid donor. This chain is Lipid II:glycine glycyltransferase (femX), found in Staphylococcus haemolyticus (strain JCSC1435).